A 363-amino-acid polypeptide reads, in one-letter code: Chalcone synthase B (363 aa).

Residue C170 is part of the active site.

Belongs to the thiolase-like superfamily. Chalcone/stilbene synthases family.

The catalysed reaction is (E)-4-coumaroyl-CoA + 3 malonyl-CoA + 3 H(+) = 2',4,4',6'-tetrahydroxychalcone + 3 CO2 + 4 CoA. Its pathway is secondary metabolite biosynthesis; flavonoid biosynthesis. Functionally, the primary product of this enzyme is 4,2',4',6'-tetrahydroxychalcone (also termed naringenin-chalcone or chalcone) which can under specific conditions spontaneously isomerize into naringenin. The chain is Chalcone synthase B (CHSB) from Ipomoea nil (Japanese morning glory).